Reading from the N-terminus, the 359-residue chain is MEKIFQNVDIKPLLIDFSNPFIKNAAKKLFQLEEQLPLVPVNVMMDFKGINRATVHGLSRVLQDEIPNYMLDIKPGGYKIEDSTDLFMTEQFVRNRINFIPIYAENETLVFALRSLNNSCEVKTIYSRDLIQVAGPKLKYPIFNPTFEIGFLQPGKSLIIEDIYIKKGIGRKHAAFNLAVKTHFSHLDIEQYPTDKKEYMALSGYKQSSMTSDPRHHRLGLCFPAVPLPRINQVVRTYLKNACRVIIGRIQNIQKIYENFEEPQPELVLFSMDEEKTKAIITIKDETHTIGNLLKTCIYEMIPDISFVGYQCIPHKQEMVLTIIHKASQEDLITLLEKSIQNIIQIFQTLEKNIDERIA.

The protein in the N-terminal section; belongs to the archaeal RpoD/eukaryotic RPB3 RNA polymerase subunit family. In the C-terminal section; belongs to the archaeal RpoL/eukaryotic RPB11/RPC19 RNA polymerase subunit family. In terms of assembly, part of the viral DNA-directed RNA polymerase that consists of 8 polII-like subunits (RPB1, RPB2, RPB3, RPB5, RPB6, RPB7, RPB9, RPB10), a capping enzyme and a termination factor.

The protein localises to the host cytoplasm. Its subcellular location is the virion. Functionally, component of the DNA-directed RNA polymerase (RNAP) that catalyzes the transcription in the cytoplasm of viral DNA into RNA using the four ribonucleoside triphosphates as substrates. The chain is DNA-directed RNA polymerase RPB3-11 homolog from Ornithodoros (relapsing fever ticks).